Consider the following 750-residue polypeptide: Neprilysin (750 aa).

Positions 1-14 are enriched in polar residues; the sequence is MGKSESQMDITDIN. A disordered region spans residues 1 to 20; that stretch reads MGKSESQMDITDINTPKPKK. Gly-2 carries N-myristoyl glycine lipidation. Over 2–28 the chain is Cytoplasmic; that stretch reads GKSESQMDITDINTPKPKKKQRWTPLE. 2 positions are modified to phosphoserine: Ser-4 and Ser-6. The Stop-transfer sequence signature appears at 16-23; sequence PKPKKKQR. The helical; Signal-anchor for type II membrane protein transmembrane segment at 29–51 threads the bilayer; the sequence is ISLSVLVLLLTIIAVTMIALYAT. The Extracellular portion of the chain corresponds to 52 to 750; it reads YDDGICKSSD…MNPEKKCRVW (699 aa). In terms of domain architecture, Peptidase M13 spans 56 to 750; it reads ICKSSDCIKS…MNPEKKCRVW (695 aa). 6 disulfides stabilise this stretch: Cys-57-Cys-62, Cys-80-Cys-735, Cys-88-Cys-695, Cys-143-Cys-411, Cys-234-Cys-242, and Cys-621-Cys-747. Residue Arg-103 coordinates a peptide. Asn-145 carries an N-linked (GlcNAc...) asparagine glycan. 4 N-linked (GlcNAc...) asparagine glycosylation sites follow: Asn-285, Asn-311, Asn-325, and Asn-335. Zn(2+) is bound at residue His-584. Residue Glu-585 is part of the active site. A Zn(2+)-binding site is contributed by His-588. Residue Asn-628 is glycosylated (N-linked (GlcNAc...) asparagine). Glu-647 serves as a coordination point for Zn(2+). The active-site Proton donor is the Asp-651.

The protein belongs to the peptidase M13 family. The cofactor is Zn(2+). Post-translationally, myristoylation is a determinant of membrane targeting. Glycosylation at Asn-628 is necessary both for surface expression and neutral endopeptidase activity.

The protein localises to the cell membrane. The enzyme catalyses Preferential cleavage of polypeptides between hydrophobic residues, particularly with Phe or Tyr at P1'.. It carries out the reaction substance P + H2O = substance P(1-9) + L-Leu-L-Met-NH2. The catalysed reaction is substance P + H2O = substance P(1-7) + L-Phe-Gly-L-Leu-L-Met-NH2. It catalyses the reaction neurotensin + H2O = neurotensin(1-11) + L-isoleucyl-L-leucine. The enzyme catalyses neurotensin + H2O = neurotensin(1-10) + L-tyrosyl-L-isoleucyl-L-leucine. Functionally, thermolysin-like specificity, but is almost confined on acting on polypeptides of up to 30 amino acids. Biologically important in the destruction of opioid peptides such as Met- and Leu-enkephalins by cleavage of a Gly-Phe bond. Catalyzes cleavage of bradykinin, substance P and neurotensin peptides. Able to cleave angiotensin-1, angiotensin-2 and angiotensin 1-9. Involved in the degradation of atrial natriuretic factor (ANF) and brain natriuretic factor (BNP(1-32)). Displays UV-inducible elastase activity toward skin preelastic and elastic fibers. The sequence is that of Neprilysin (MME) from Pongo abelii (Sumatran orangutan).